A 227-amino-acid polypeptide reads, in one-letter code: Small ribosomal subunit protein uS5 (227 aa).

A disordered region spans residues methionine 1–tryptophan 22. Low complexity predominate over residues arginine 7–asparagine 18. An S5 DRBM domain is found at leucine 63 to valine 126.

It belongs to the universal ribosomal protein uS5 family. In terms of assembly, part of the 30S ribosomal subunit. Contacts protein S4.

With S4 and S12 plays an important role in translational accuracy. This chain is Small ribosomal subunit protein uS5, found in Methanosphaera stadtmanae (strain ATCC 43021 / DSM 3091 / JCM 11832 / MCB-3).